A 402-amino-acid chain; its full sequence is Imidazolonepropionase (402 aa).

Positions 69 and 71 each coordinate Fe(3+). Zn(2+)-binding residues include H69 and H71. Residues R78, Y141, and H174 each coordinate 4-imidazolone-5-propanoate. Y141 provides a ligand contact to N-formimidoyl-L-glutamate. H239 provides a ligand contact to Fe(3+). H239 is a Zn(2+) binding site. Residue Q242 participates in 4-imidazolone-5-propanoate binding. D314 is a binding site for Fe(3+). Zn(2+) is bound at residue D314. N-formimidoyl-L-glutamate contacts are provided by N316 and G318. 4-imidazolone-5-propanoate is bound at residue T319.

Belongs to the metallo-dependent hydrolases superfamily. HutI family. Zn(2+) serves as cofactor. Requires Fe(3+) as cofactor.

The protein resides in the cytoplasm. The catalysed reaction is 4-imidazolone-5-propanoate + H2O = N-formimidoyl-L-glutamate. Its pathway is amino-acid degradation; L-histidine degradation into L-glutamate; N-formimidoyl-L-glutamate from L-histidine: step 3/3. Its function is as follows. Catalyzes the hydrolytic cleavage of the carbon-nitrogen bond in imidazolone-5-propanoate to yield N-formimidoyl-L-glutamate. It is the third step in the universal histidine degradation pathway. The protein is Imidazolonepropionase of Maricaulis maris (strain MCS10) (Caulobacter maris).